The following is a 425-amino-acid chain: Phosphomethylpyrimidine synthase (425 aa).

Residues Met-94, Tyr-123, His-162, 184–186, 225–228, and Glu-264 contribute to the substrate site; these read SRG and NGMR. His-268 provides a ligand contact to Zn(2+). Residue Tyr-291 participates in substrate binding. His-332 is a binding site for Zn(2+). Residues Cys-407, Cys-410, and Cys-414 each coordinate [4Fe-4S] cluster.

It belongs to the ThiC family. The cofactor is [4Fe-4S] cluster.

The enzyme catalyses 5-amino-1-(5-phospho-beta-D-ribosyl)imidazole + S-adenosyl-L-methionine = 4-amino-2-methyl-5-(phosphooxymethyl)pyrimidine + CO + 5'-deoxyadenosine + formate + L-methionine + 3 H(+). Its pathway is cofactor biosynthesis; thiamine diphosphate biosynthesis. Functionally, catalyzes the synthesis of the hydroxymethylpyrimidine phosphate (HMP-P) moiety of thiamine from aminoimidazole ribotide (AIR) in a radical S-adenosyl-L-methionine (SAM)-dependent reaction. This chain is Phosphomethylpyrimidine synthase, found in Methanocorpusculum labreanum (strain ATCC 43576 / DSM 4855 / Z).